The primary structure comprises 298 residues: Cytidine deaminase (298 aa).

CMP/dCMP-type deaminase domains lie at 47 to 167 (TEQQ…FGPS) and 186 to 298 (DSDD…PLLG). 88-90 (NLE) is a substrate binding site. Histidine 101 serves as a coordination point for Zn(2+). Glutamate 103 functions as the Proton donor in the catalytic mechanism. Zn(2+) is bound by residues cysteine 128 and cysteine 131.

Belongs to the cytidine and deoxycytidylate deaminase family. Homodimer. Zn(2+) serves as cofactor.

It carries out the reaction cytidine + H2O + H(+) = uridine + NH4(+). The enzyme catalyses 2'-deoxycytidine + H2O + H(+) = 2'-deoxyuridine + NH4(+). Functionally, this enzyme scavenges exogenous and endogenous cytidine and 2'-deoxycytidine for UMP synthesis. The sequence is that of Cytidine deaminase from Shewanella frigidimarina (strain NCIMB 400).